Consider the following 395-residue polypeptide: Phosphoglycerate kinase (395 aa).

Substrate contacts are provided by residues 21–23, Arg-36, 59–62, Arg-120, and Arg-153; these read DFN and HLGR. Residues Lys-203, Glu-325, and 351–354 contribute to the ATP site; that span reads GGDS.

This sequence belongs to the phosphoglycerate kinase family. In terms of assembly, monomer.

Its subcellular location is the cytoplasm. The enzyme catalyses (2R)-3-phosphoglycerate + ATP = (2R)-3-phospho-glyceroyl phosphate + ADP. It participates in carbohydrate degradation; glycolysis; pyruvate from D-glyceraldehyde 3-phosphate: step 2/5. This Roseiflexus castenholzii (strain DSM 13941 / HLO8) protein is Phosphoglycerate kinase.